The chain runs to 485 residues: Glutamate--tRNA ligase (485 aa).

The short motif at 11–21 (PSPTGHLHIGN) is the 'HIGH' region element. The 'KMSKS' region signature appears at 252-256 (KLSKR). K255 contributes to the ATP binding site.

This sequence belongs to the class-I aminoacyl-tRNA synthetase family. Glutamate--tRNA ligase type 1 subfamily. Monomer.

It is found in the cytoplasm. The catalysed reaction is tRNA(Glu) + L-glutamate + ATP = L-glutamyl-tRNA(Glu) + AMP + diphosphate. In terms of biological role, catalyzes the attachment of glutamate to tRNA(Glu) in a two-step reaction: glutamate is first activated by ATP to form Glu-AMP and then transferred to the acceptor end of tRNA(Glu). The polypeptide is Glutamate--tRNA ligase (Bacillus cytotoxicus (strain DSM 22905 / CIP 110041 / 391-98 / NVH 391-98)).